The following is a 176-amino-acid chain: Small ribosomal subunit protein uS4 (176 aa).

The 63-residue stretch at 103-165 folds into the S4 RNA-binding domain; it reads RRLQTIVYKK…PTSPYAKRRL (63 aa).

This sequence belongs to the universal ribosomal protein uS4 family. As to quaternary structure, part of the 30S ribosomal subunit. Contacts protein S5. The interaction surface between S4 and S5 is involved in control of translational fidelity.

Functionally, one of the primary rRNA binding proteins, it binds directly to 16S rRNA where it nucleates assembly of the body of the 30S subunit. In terms of biological role, with S5 and S12 plays an important role in translational accuracy. The sequence is that of Small ribosomal subunit protein uS4 from Hyperthermus butylicus (strain DSM 5456 / JCM 9403 / PLM1-5).